Here is a 561-residue protein sequence, read N- to C-terminus: MWIVVFSLLVLTVTFFVYGALRRKAFYKRVDKLEDWKNDILQRPIPDEIGKVKGLTMSGETEEKFEVWRSDWDDIVGVILPNVEEQLFDVEDFANKYRFQKAKALLDTIEQRLHSIEEQLKIMVDDIQVLVQSEEQNRTEIGSVRELQQKLIKEAITRRGSLSSSAKVFDEKLEKANELLQAFDERTEKGNYIQASEVLEEAKELLGQIEHLLKIVPGLFVELQTNIPAELTNLKNGLRDMEEAGFFLETFAIDSQMERLEEKRVELLEQLTVLECNGMEEEINFIEESMEQMFELLEKEVEAKNEITILLPNLREDLTKTEEKLTHLKEETESVQLSYRLAEEELVFQQKLGKELKELRQQLQVIDEVTEEQKQTFSSVRSMLEEWREGLTACQNKIEQAQESLNSLRKDELKAKEELKQLKEKLLEDKRLVQKSNIPGLPETLLHRLEDGEQKLAQAIAKLSDVPLEMGRVTALVDEAQGLIHENSSILHETIEKARLAEHVIQYGNRYRSRSAEVKKRLSNAEELFRAFEYDEAIEMAVQAIEPFEKDVLEKVQHLAG.

Residues Met1–Ile3 are Extracellular-facing. A helical transmembrane segment spans residues Val4 to Arg22. Residues Arg23–Gly561 are Cytoplasmic-facing. 3 coiled-coil regions span residues Arg98–Leu130, Ala166–Lys214, and Phe251–Asp465.

This sequence belongs to the EzrA family.

It localises to the cell membrane. In terms of biological role, negative regulator of FtsZ ring formation; modulates the frequency and position of FtsZ ring formation. Inhibits FtsZ ring formation at polar sites. Interacts either with FtsZ or with one of its binding partners to promote depolymerization. The polypeptide is Septation ring formation regulator EzrA (Halalkalibacterium halodurans (strain ATCC BAA-125 / DSM 18197 / FERM 7344 / JCM 9153 / C-125) (Bacillus halodurans)).